The primary structure comprises 261 residues: Zinc finger protein 664 (261 aa).

C2H2-type zinc fingers lie at residues 3–25 (YKCP…QKVH), 31–53 (HKCD…WRDH), 59–81 (YKCD…KKIH), 87–109 (YKCY…MRVH), 115–137 (YVCS…QRVH), 143–165 (FKCE…QRVH), 171–193 (YKCY…QRVH), 199–221 (YRCC…QRVH), and 227–249 (FKCD…QRVH). K257 is covalently cross-linked (Glycyl lysine isopeptide (Lys-Gly) (interchain with G-Cter in SUMO2)).

This sequence belongs to the krueppel C2H2-type zinc-finger protein family. As to expression, expressed in the organ of Corti, stria vascularis, auditory nerve and retina. Lower levels in the tongue, cerebellum, small intestine and kidney.

Its subcellular location is the nucleus. Its function is as follows. May be involved in transcriptional regulation. In Cavia porcellus (Guinea pig), this protein is Zinc finger protein 664 (ZNF664).